The chain runs to 138 residues: Large ribosomal subunit protein uL16 (138 aa).

The segment covering 1–17 has biased composition (basic residues); sequence MLIPRKVKHRKQHHPRQ. A disordered region spans residues 1 to 22; that stretch reads MLIPRKVKHRKQHHPRQRGIAS.

This sequence belongs to the universal ribosomal protein uL16 family. As to quaternary structure, part of the 50S ribosomal subunit.

Its function is as follows. Binds 23S rRNA and is also seen to make contacts with the A and possibly P site tRNAs. The protein is Large ribosomal subunit protein uL16 of Mycobacterium avium (strain 104).